Reading from the N-terminus, the 307-residue chain is DNA damage tolerance protein rad31 (307 aa).

Functionally, could be involved in a ubiquitin-related process important for DNA damage tolerance. Acts in a process which is defective in the checkpoint rad mutants and which involves hus5. The polypeptide is DNA damage tolerance protein rad31 (rad31) (Schizosaccharomyces pombe (strain 972 / ATCC 24843) (Fission yeast)).